A 188-amino-acid chain; its full sequence is Ribonuclease HII (188 aa).

Residues 6-188 (KPLCGIDEAG…VKGLDEPTLF (183 aa)) enclose the RNase H type-2 domain. The a divalent metal cation site is built by aspartate 12, glutamate 13, and aspartate 99.

This sequence belongs to the RNase HII family. Mn(2+) serves as cofactor. The cofactor is Mg(2+).

Its subcellular location is the cytoplasm. The enzyme catalyses Endonucleolytic cleavage to 5'-phosphomonoester.. In terms of biological role, endonuclease that specifically degrades the RNA of RNA-DNA hybrids. The polypeptide is Ribonuclease HII (Sulfurovum sp. (strain NBC37-1)).